The chain runs to 154 residues: Probable chemoreceptor glutamine deamidase CheD (154 aa).

This sequence belongs to the CheD family.

The catalysed reaction is L-glutaminyl-[protein] + H2O = L-glutamyl-[protein] + NH4(+). Its function is as follows. Probably deamidates glutamine residues to glutamate on methyl-accepting chemotaxis receptors (MCPs), playing an important role in chemotaxis. The polypeptide is Probable chemoreceptor glutamine deamidase CheD (Methanococcus maripaludis (strain C6 / ATCC BAA-1332)).